The following is a 313-amino-acid chain: uncharacterized protein (313 aa).

This sequence to M.jannaschii MJ0977 C-terminal region.

This is an uncharacterized protein from Methanocaldococcus jannaschii (strain ATCC 43067 / DSM 2661 / JAL-1 / JCM 10045 / NBRC 100440) (Methanococcus jannaschii).